We begin with the raw amino-acid sequence, 580 residues long: Glutamine--tRNA ligase (580 aa).

Positions 51–61 (PEPNGYLHIGH) match the 'HIGH' region motif. ATP contacts are provided by residues 52–54 (EPN) and 58–64 (HIGHAKS). The L-glutamine site is built by D84 and Y233. ATP contacts are provided by residues T252 and 287–288 (RL). Positions 294-298 (ITSKR) match the 'KMSKS' region motif.

The protein belongs to the class-I aminoacyl-tRNA synthetase family. In terms of assembly, monomer.

It localises to the cytoplasm. The enzyme catalyses tRNA(Gln) + L-glutamine + ATP = L-glutaminyl-tRNA(Gln) + AMP + diphosphate. The polypeptide is Glutamine--tRNA ligase (Ralstonia nicotianae (strain ATCC BAA-1114 / GMI1000) (Ralstonia solanacearum)).